We begin with the raw amino-acid sequence, 300 residues long: m7GpppN-mRNA hydrolase NUDT17 (300 aa).

A Nudix hydrolase domain is found at 88–239; sequence SRGVDVGVAV…KECVQIPADL (152 aa). A Nudix box motif is present at residues 127-148; it reads GHVELDEKLLDAGLRELLEETG. Mg(2+)-binding residues include Glu142 and Glu146.

It belongs to the Nudix hydrolase family. Requires Mg(2+) as cofactor. The cofactor is Mn(2+).

It catalyses the reaction a 5'-end (N(7)-methyl 5'-triphosphoguanosine)-ribonucleoside in mRNA + H2O = N(7)-methyl-GDP + a 5'-end phospho-ribonucleoside in mRNA + 2 H(+). Functionally, acts as a decapping enzyme capable of hydrolyzing monomethylated capped RNAs (in vitro). Hydrolyzes monomethylated capped RNA after alpha and beta phosphates to form N(7)-methyl-GDP. Shows low activity towards unmethylated capped RNA. The chain is m7GpppN-mRNA hydrolase NUDT17 (nudt17) from Danio rerio (Zebrafish).